We begin with the raw amino-acid sequence, 385 residues long: Chaperone protein DnaJ 2 (385 aa).

The J domain occupies 10-75 (DYYKELGVSS…AKRKEYDETR (66 aa)). Residues 155-233 (GVTVPLRMTS…CHGSGIQNRT (79 aa)) form a CR-type zinc finger. Zn(2+)-binding residues include cysteine 168, cysteine 171, cysteine 185, cysteine 188, cysteine 207, cysteine 210, cysteine 221, and cysteine 224. 4 CXXCXGXG motif repeats span residues 168 to 175 (CTTCHGSG), 185 to 192 (CPICNGTG), 207 to 214 (CDGCRGTG), and 221 to 228 (CVDCHGSG).

This sequence belongs to the DnaJ family. In terms of assembly, homodimer. The cofactor is Zn(2+).

It is found in the cytoplasm. Its function is as follows. Participates actively in the response to hyperosmotic and heat shock by preventing the aggregation of stress-denatured proteins and by disaggregating proteins, also in an autonomous, DnaK-independent fashion. Unfolded proteins bind initially to DnaJ; upon interaction with the DnaJ-bound protein, DnaK hydrolyzes its bound ATP, resulting in the formation of a stable complex. GrpE releases ADP from DnaK; ATP binding to DnaK triggers the release of the substrate protein, thus completing the reaction cycle. Several rounds of ATP-dependent interactions between DnaJ, DnaK and GrpE are required for fully efficient folding. Also involved, together with DnaK and GrpE, in the DNA replication of plasmids through activation of initiation proteins. This Nocardia farcinica (strain IFM 10152) protein is Chaperone protein DnaJ 2.